The chain runs to 714 residues: Polyribonucleotide nucleotidyltransferase (714 aa).

Positions 489 and 495 each coordinate Mg(2+). One can recognise a KH domain in the interval Pro-556 to Ile-615. The S1 motif domain occupies Gly-625–Lys-693. The interval Ser-691 to Asp-714 is disordered. A compositionally biased stretch (basic and acidic residues) spans Pro-700–Asp-714.

The protein belongs to the polyribonucleotide nucleotidyltransferase family. It depends on Mg(2+) as a cofactor.

It is found in the cytoplasm. The catalysed reaction is RNA(n+1) + phosphate = RNA(n) + a ribonucleoside 5'-diphosphate. Functionally, involved in mRNA degradation. Catalyzes the phosphorolysis of single-stranded polyribonucleotides processively in the 3'- to 5'-direction. This Streptococcus equi subsp. zooepidemicus (strain MGCS10565) protein is Polyribonucleotide nucleotidyltransferase.